A 466-amino-acid chain; its full sequence is UDP-N-acetylmuramoylalanine--D-glutamate ligase (466 aa).

117-123 (GTKGKTT) lines the ATP pocket.

It belongs to the MurCDEF family.

The protein resides in the cytoplasm. The catalysed reaction is UDP-N-acetyl-alpha-D-muramoyl-L-alanine + D-glutamate + ATP = UDP-N-acetyl-alpha-D-muramoyl-L-alanyl-D-glutamate + ADP + phosphate + H(+). It functions in the pathway cell wall biogenesis; peptidoglycan biosynthesis. Cell wall formation. Catalyzes the addition of glutamate to the nucleotide precursor UDP-N-acetylmuramoyl-L-alanine (UMA). This is UDP-N-acetylmuramoylalanine--D-glutamate ligase from Roseiflexus sp. (strain RS-1).